A 311-amino-acid polypeptide reads, in one-letter code: Probable dihydroorotate dehydrogenase A (fumarate) (311 aa).

Residues lysine 45, 69 to 73 (NSMGL), and asparagine 128 contribute to the substrate site. Residue 45–46 (KT) coordinates FMN. Asparagine 128 provides a ligand contact to FMN. Cysteine 131 serves as the catalytic Nucleophile. FMN-binding residues include lysine 165 and valine 193. 194–195 (NS) is a substrate binding site. FMN contacts are provided by residues glycine 220, 248 to 249 (GG), and 270 to 271 (GT).

It belongs to the dihydroorotate dehydrogenase family. Type 1 subfamily. As to quaternary structure, homodimer. Requires FMN as cofactor.

Its subcellular location is the cytoplasm. The enzyme catalyses (S)-dihydroorotate + fumarate = orotate + succinate. It functions in the pathway pyrimidine metabolism; UMP biosynthesis via de novo pathway. Its function is as follows. Catalyzes the conversion of dihydroorotate to orotate with fumarate as the electron acceptor. This Streptococcus pneumoniae (strain ATCC BAA-255 / R6) protein is Probable dihydroorotate dehydrogenase A (fumarate) (pyrDA).